Consider the following 91-residue polypeptide: LYR motif-containing protein 4 (91 aa).

2 residues coordinate pantetheine 4'-phosphate: Arg6 and Lys44. Lys47 carries the post-translational modification N6-succinyllysine.

It belongs to the complex I LYR family. In terms of assembly, homodimer. Component of the mitochondrial core iron-sulfur cluster (ISC) complex composed of NFS1, LYRM4, NDUFAB1, ISCU, FXN, and FDX2; this complex is a heterohexamer containing two copies of each monomer. Component of the cyteine desulfurase complex composed of NFS1, LYRM4 and NDUFAB1; this complex contributes to the stability and cysteine desulfurase activity of NFS1. Interacts with FXN; this interaction is nickel-dependent. Interacts with the cytoplasmic form of NFS1; the complex increases the stability of NFS1. Forms a complex with the cytoplasmic form of NFS1; this complex increases the stability and cysteine desulfurase activity of NFS1. Interacts with NFS1. Component of a complex composed of FXN, NFS1, LYRM4 and ISCU.

It is found in the mitochondrion. The protein resides in the nucleus. It participates in cofactor biosynthesis; iron-sulfur cluster biosynthesis. In terms of biological role, stabilizing factor, of the core iron-sulfur cluster (ISC) assembly complex, that regulates, in association with NDUFAB1, the stability and the cysteine desulfurase activity of NFS1 and participates in the [2Fe-2S] clusters assembly on the scaffolding protein ISCU. The core iron-sulfur cluster (ISC) assembly complex is involved in the de novo synthesis of a [2Fe-2S] cluster, the first step of the mitochondrial iron-sulfur protein biogenesis. This process is initiated by the cysteine desulfurase complex (NFS1:LYRM4:NDUFAB1) that produces persulfide which is delivered on the scaffold protein ISCU in a FXN-dependent manner. Then this complex is stabilized by FDX2 which provides reducing equivalents to accomplish the [2Fe-2S] cluster assembly. Finally, the [2Fe-2S] cluster is transferred from ISCU to chaperone proteins, including HSCB, HSPA9 and GLRX5. May also participates in the iron-sulfur protein biogenesis in the cytoplasm through its interaction with the cytoplasmic form of NFS1. In Mus musculus (Mouse), this protein is LYR motif-containing protein 4.